Here is a 378-residue protein sequence, read N- to C-terminus: Rhodopsin (378 aa).

Residues 1 to 53 (MMSIASGPSHAAYTWASQGGGFGNQTVVDKVPPEMLHMVDAHWYQFPPMNPLW) lie on the Extracellular side of the membrane. Asn24 is a glycosylation site (N-linked (GlcNAc...) asparagine). The chain crosses the membrane as a helical span at residues 54–78 (HALLGFVIGVLGVISVIGNGMVIYI). Over 79–90 (FTTTKSLRTPSN) the chain is Cytoplasmic. A helical transmembrane segment spans residues 91–115 (LLVVNLAISDFLMMLCMSPAMVINC). Residues 116 to 130 (YYETWVLGPLFCELY) are Extracellular-facing. Cys127 and Cys204 are oxidised to a cystine. A helical transmembrane segment spans residues 131 to 150 (GLAGSLFGCASIWTMTMIAF). The Cytoplasmic segment spans residues 151–169 (DRYNVIVKGLSAKPMTING). Residues 170 to 193 (ALIRILTIWFFTLAWTIAPMFGWN) form a helical membrane-spanning segment. Over 194-217 (RYVPEGNMTACGTDYLTKDLFSRS) the chain is Extracellular. Asn200 is a glycosylation site (N-linked (GlcNAc...) asparagine). Residues 218 to 245 (YILIYSIFVYFTPLFLIIYSYFFIIQAV) traverse the membrane as a helical segment. Over 246–280 (AAHEKNMREQAKKMNVASLRSAENQSTSAECKLAK) the chain is Cytoplasmic. The helical transmembrane segment at 281 to 304 (VALMTISLWFMAWTPYLVINYSGI) threads the bilayer. Residues 305–311 (FETTKIS) lie on the Extracellular side of the membrane. The chain crosses the membrane as a helical span at residues 312–336 (PLFTIWGSLFAKANAVYNPIVYGIS). Lys323 carries the N6-(retinylidene)lysine modification. At 337–378 (HPKYRAALFQKFPSLACTTEPTGADTMSTTTTVTEGNEKPAA) the chain is on the cytoplasmic side.

It belongs to the G-protein coupled receptor 1 family. Opsin subfamily. In terms of processing, phosphorylated on some or all of the serine and threonine residues present in the C-terminal region.

The protein localises to the membrane. Functionally, visual pigments are the light-absorbing molecules that mediate vision. They consist of an apoprotein, opsin, covalently linked to cis-retinal. This chain is Rhodopsin, found in Camponotus atriceps (Florida carpenter ant).